Here is a 376-residue protein sequence, read N- to C-terminus: N-acetyldiaminopimelate deacetylase (376 aa).

Residue Asp-69 is part of the active site. The active-site Proton acceptor is Glu-128.

Belongs to the peptidase M20A family. N-acetyldiaminopimelate deacetylase subfamily.

The catalysed reaction is N-acetyl-(2S,6S)-2,6-diaminopimelate + H2O = (2S,6S)-2,6-diaminopimelate + acetate. It participates in amino-acid biosynthesis; L-lysine biosynthesis via DAP pathway; LL-2,6-diaminopimelate from (S)-tetrahydrodipicolinate (acetylase route): step 3/3. In terms of biological role, catalyzes the conversion of N-acetyl-diaminopimelate to diaminopimelate and acetate. This Bacillus cytotoxicus (strain DSM 22905 / CIP 110041 / 391-98 / NVH 391-98) protein is N-acetyldiaminopimelate deacetylase.